Reading from the N-terminus, the 267-residue chain is Translation initiation factor 2 subunit alpha (267 aa).

The S1 motif domain occupies 12-83; it reads GEIVMATVER…KRKYANLSLR (72 aa).

The protein belongs to the eIF-2-alpha family. In terms of assembly, heterotrimer composed of an alpha, a beta and a gamma chain.

EIF-2 functions in the early steps of protein synthesis by forming a ternary complex with GTP and initiator tRNA. The protein is Translation initiation factor 2 subunit alpha of Methanopyrus kandleri (strain AV19 / DSM 6324 / JCM 9639 / NBRC 100938).